We begin with the raw amino-acid sequence, 163 residues long: MSALVGVIMGSKSDWSTLSHTADMLDKLGIPYEVKVVSAHRTPDLLFQYAEEAEGRGLEVIIAGAGGAAHLPGMCAAKTHLPVLGVPVQSSMLSGVDSLLSIVQMPAGVPVATLAIGKAGAVNAALLSASILGAKHPQYHEALKQFRANQTETVLDNPDPRDA.

Substrate contacts are provided by serine 11, aspartate 14, and arginine 41.

The protein belongs to the AIR carboxylase family. Class I subfamily.

It catalyses the reaction 5-carboxyamino-1-(5-phospho-D-ribosyl)imidazole + H(+) = 5-amino-1-(5-phospho-D-ribosyl)imidazole-4-carboxylate. It functions in the pathway purine metabolism; IMP biosynthesis via de novo pathway; 5-amino-1-(5-phospho-D-ribosyl)imidazole-4-carboxylate from 5-amino-1-(5-phospho-D-ribosyl)imidazole (N5-CAIR route): step 2/2. In terms of biological role, catalyzes the conversion of N5-carboxyaminoimidazole ribonucleotide (N5-CAIR) to 4-carboxy-5-aminoimidazole ribonucleotide (CAIR). This chain is N5-carboxyaminoimidazole ribonucleotide mutase, found in Pseudomonas aeruginosa (strain ATCC 15692 / DSM 22644 / CIP 104116 / JCM 14847 / LMG 12228 / 1C / PRS 101 / PAO1).